Reading from the N-terminus, the 410-residue chain is Phosphoglycerate kinase (410 aa).

Residues 22–24 (DIN), arginine 39, 62–65 (HQSR), arginine 119, and arginine 159 contribute to the substrate site. ATP contacts are provided by residues glutamate 332 and 358–361 (GGHL).

The protein belongs to the phosphoglycerate kinase family. As to quaternary structure, homodimer.

The protein resides in the cytoplasm. It catalyses the reaction (2R)-3-phosphoglycerate + ATP = (2R)-3-phospho-glyceroyl phosphate + ADP. The protein operates within carbohydrate degradation; glycolysis; pyruvate from D-glyceraldehyde 3-phosphate: step 2/5. This chain is Phosphoglycerate kinase (pgk), found in Methanothermus fervidus (strain ATCC 43054 / DSM 2088 / JCM 10308 / V24 S).